A 144-amino-acid polypeptide reads, in one-letter code: MRLNTIKPGAGSKSAGKRVGRGIGSGLGKTCGRGHKGQKSRAGGFHKVGFEGGQMPLQRRLPKRGFVSLTRGRCAEVRLSELAQLPVEDVDLLVLKQAGVIAADALSAKVVLSGAISKKVVLRGIAATAGARAAIEAAGGSCGE.

Positions 1-51 (MRLNTIKPGAGSKSAGKRVGRGIGSGLGKTCGRGHKGQKSRAGGFHKVGFE) are disordered. Residues 21–31 (RGIGSGLGKTC) are compositionally biased toward gly residues.

Belongs to the universal ribosomal protein uL15 family. In terms of assembly, part of the 50S ribosomal subunit.

In terms of biological role, binds to the 23S rRNA. The chain is Large ribosomal subunit protein uL15 from Azoarcus sp. (strain BH72).